A 565-amino-acid chain; its full sequence is Proline--tRNA ligase (565 aa).

Belongs to the class-II aminoacyl-tRNA synthetase family. ProS type 1 subfamily. As to quaternary structure, homodimer.

It is found in the cytoplasm. The enzyme catalyses tRNA(Pro) + L-proline + ATP = L-prolyl-tRNA(Pro) + AMP + diphosphate. Catalyzes the attachment of proline to tRNA(Pro) in a two-step reaction: proline is first activated by ATP to form Pro-AMP and then transferred to the acceptor end of tRNA(Pro). As ProRS can inadvertently accommodate and process non-cognate amino acids such as alanine and cysteine, to avoid such errors it has two additional distinct editing activities against alanine. One activity is designated as 'pretransfer' editing and involves the tRNA(Pro)-independent hydrolysis of activated Ala-AMP. The other activity is designated 'posttransfer' editing and involves deacylation of mischarged Ala-tRNA(Pro). The misacylated Cys-tRNA(Pro) is not edited by ProRS. This is Proline--tRNA ligase from Francisella tularensis subsp. tularensis (strain WY96-3418).